A 361-amino-acid polypeptide reads, in one-letter code: Histidinol-phosphate aminotransferase (361 aa).

N6-(pyridoxal phosphate)lysine is present on Lys218.

This sequence belongs to the class-II pyridoxal-phosphate-dependent aminotransferase family. Histidinol-phosphate aminotransferase subfamily. As to quaternary structure, homodimer. It depends on pyridoxal 5'-phosphate as a cofactor.

It catalyses the reaction L-histidinol phosphate + 2-oxoglutarate = 3-(imidazol-4-yl)-2-oxopropyl phosphate + L-glutamate. The protein operates within amino-acid biosynthesis; L-histidine biosynthesis; L-histidine from 5-phospho-alpha-D-ribose 1-diphosphate: step 7/9. In Ruegeria pomeroyi (strain ATCC 700808 / DSM 15171 / DSS-3) (Silicibacter pomeroyi), this protein is Histidinol-phosphate aminotransferase.